We begin with the raw amino-acid sequence, 610 residues long: Chaperone protein DnaK (610 aa).

Position 173 is a phosphothreonine; by autocatalysis (T173). Disordered stretches follow at residues 525 to 544 (ENIGEEDKKSAEEKKDALKT) and 576 to 610 (AAQQQQQAQGANAGQNNDSTVEDAEFKEVKDDDKK). Over residues 529–542 (EEDKKSAEEKKDAL) the composition is skewed to basic and acidic residues. Over residues 576–592 (AAQQQQQAQGANAGQNN) the composition is skewed to low complexity. Basic and acidic residues predominate over residues 599 to 610 (AEFKEVKDDDKK).

This sequence belongs to the heat shock protein 70 family.

In terms of biological role, acts as a chaperone. This Staphylococcus aureus (strain Mu3 / ATCC 700698) protein is Chaperone protein DnaK.